A 467-amino-acid chain; its full sequence is Ribulose bisphosphate carboxylase large chain (467 aa).

Positions 1 to 2 (MS) are excised as a propeptide. The residue at position 3 (P3) is an N-acetylproline. K14 is subject to N6,N6,N6-trimethyllysine. Residues N123 and T173 each contribute to the substrate site. The active-site Proton acceptor is K175. K177 provides a ligand contact to substrate. 3 residues coordinate Mg(2+): K201, D203, and E204. K201 is modified (N6-carboxylysine). Residue H294 is the Proton acceptor of the active site. 3 residues coordinate substrate: R295, H327, and S379.

This sequence belongs to the RuBisCO large chain family. Type I subfamily. In terms of assembly, heterohexadecamer of 8 large chains and 8 small chains; disulfide-linked. The disulfide link is formed within the large subunit homodimers. The cofactor is Mg(2+). The disulfide bond which can form in the large chain dimeric partners within the hexadecamer appears to be associated with oxidative stress and protein turnover.

It is found in the plastid. The protein localises to the chloroplast. The catalysed reaction is 2 (2R)-3-phosphoglycerate + 2 H(+) = D-ribulose 1,5-bisphosphate + CO2 + H2O. It catalyses the reaction D-ribulose 1,5-bisphosphate + O2 = 2-phosphoglycolate + (2R)-3-phosphoglycerate + 2 H(+). Its function is as follows. RuBisCO catalyzes two reactions: the carboxylation of D-ribulose 1,5-bisphosphate, the primary event in carbon dioxide fixation, as well as the oxidative fragmentation of the pentose substrate in the photorespiration process. Both reactions occur simultaneously and in competition at the same active site. This is Ribulose bisphosphate carboxylase large chain from Calamus usitatus (Palm tree).